We begin with the raw amino-acid sequence, 155 residues long: Catabolic 3-dehydroquinase (155 aa).

The active-site Proton acceptor is tyrosine 24. Substrate is bound by residues asparagine 75, histidine 81, and aspartate 88. The Proton donor role is filled by histidine 101. Substrate is bound by residues valine 102–serine 103 and arginine 112.

This sequence belongs to the type-II 3-dehydroquinase family. In terms of assembly, homododecamer. Adopts a ring-like structure, composed of an arrangement of two hexameric rings stacked on top of one another.

It catalyses the reaction 3-dehydroquinate = 3-dehydroshikimate + H2O. The protein operates within aromatic compound metabolism; 3,4-dihydroxybenzoate biosynthesis; 3,4-dihydroxybenzoate from 3-dehydroquinate: step 1/2. Its function is as follows. Is involved in the catabolism of quinate. Allows the utilization of quinate as carbon source via the beta-ketoadipate pathway. This is Catabolic 3-dehydroquinase from Penicillium rubens (strain ATCC 28089 / DSM 1075 / NRRL 1951 / Wisconsin 54-1255) (Penicillium chrysogenum).